The sequence spans 571 residues: MTRISRSAYAEIYGPTVVGGVGDRVRLADTLLLAEVEKDHTIFGEEVKFGGGKVIRDGMGQSQRLATDCVDTVITNALIIDAVTGIVKADIGIKDGLISGIGKAGNPDTQPGVTIIIGASTEVVAGEGLIVTAGAIDTHIHFICPQQIEEALATGTTTMIGGGTGPATGSLATTSTSGPWHMAAMLQALDTFPVNVGLFGKGSSSSHGALLEQVRAGAMGLKIHEDWASTPASIDTCLNVAEETDIQVAIHSDTLNESGFVEDTFAAFKGRTIHSFHTEGAGGGHAPDIIRAAGMPNVLPASTNPTMPFTRNTIDEHLDMVMVCHHLDPSIAEDLAFAESRIRRETIAAEDILHDLGAFSIMSSDSQAMGRVGEIVLRTWQTAHKMKLQRGPLQGDSERSDNERIKRYIAKYTINPAVAHGIAHLVGSVEVGKLADLVLWKPAFFGVKVNMVLKSGMAVSASIGDMGASISTPQPVQIRPMWGSHGKALRTSVAFVSQVSLSNPAVSELGLNKRLEAVRGCRGVTKHDMVRNNWLPAISVDPQTYQVYADGQLLRCEALAELPMAQRYFLF.

The region spanning 134–571 (GAIDTHIHFI…LPMAQRYFLF (438 aa)) is the Urease domain. Ni(2+)-binding residues include His139, His141, and Lys222. Lys222 is modified (N6-carboxylysine). His224 contributes to the substrate binding site. Ni(2+) is bound by residues His251 and His277. The active-site Proton donor is His325. Ni(2+) is bound at residue Asp365.

It belongs to the metallo-dependent hydrolases superfamily. Urease alpha subunit family. Heterotrimer of UreA (gamma), UreB (beta) and UreC (alpha) subunits. Three heterotrimers associate to form the active enzyme. Ni cation serves as cofactor. In terms of processing, carboxylation allows a single lysine to coordinate two nickel ions.

The protein resides in the cytoplasm. The catalysed reaction is urea + 2 H2O + H(+) = hydrogencarbonate + 2 NH4(+). Its pathway is nitrogen metabolism; urea degradation; CO(2) and NH(3) from urea (urease route): step 1/1. The protein is Urease subunit alpha of Bordetella bronchiseptica (strain ATCC BAA-588 / NCTC 13252 / RB50) (Alcaligenes bronchisepticus).